A 513-amino-acid chain; its full sequence is Bifunctional purine biosynthesis protein PurH (513 aa).

One can recognise an MGS-like domain in the interval 1 to 147; that stretch reads MIQIKRALVS…KNHKNVVVLT (147 aa).

Belongs to the PurH family.

It catalyses the reaction (6R)-10-formyltetrahydrofolate + 5-amino-1-(5-phospho-beta-D-ribosyl)imidazole-4-carboxamide = 5-formamido-1-(5-phospho-D-ribosyl)imidazole-4-carboxamide + (6S)-5,6,7,8-tetrahydrofolate. The catalysed reaction is IMP + H2O = 5-formamido-1-(5-phospho-D-ribosyl)imidazole-4-carboxamide. It participates in purine metabolism; IMP biosynthesis via de novo pathway; 5-formamido-1-(5-phospho-D-ribosyl)imidazole-4-carboxamide from 5-amino-1-(5-phospho-D-ribosyl)imidazole-4-carboxamide (10-formyl THF route): step 1/1. Its pathway is purine metabolism; IMP biosynthesis via de novo pathway; IMP from 5-formamido-1-(5-phospho-D-ribosyl)imidazole-4-carboxamide: step 1/1. In Leptospira biflexa serovar Patoc (strain Patoc 1 / Ames), this protein is Bifunctional purine biosynthesis protein PurH.